The following is a 337-amino-acid chain: Phosphate acyltransferase (337 aa).

Belongs to the PlsX family. As to quaternary structure, homodimer. Probably interacts with PlsY.

It localises to the cytoplasm. The enzyme catalyses a fatty acyl-[ACP] + phosphate = an acyl phosphate + holo-[ACP]. Its pathway is lipid metabolism; phospholipid metabolism. Functionally, catalyzes the reversible formation of acyl-phosphate (acyl-PO(4)) from acyl-[acyl-carrier-protein] (acyl-ACP). This enzyme utilizes acyl-ACP as fatty acyl donor, but not acyl-CoA. In Aquifex aeolicus (strain VF5), this protein is Phosphate acyltransferase.